The chain runs to 177 residues: Nucleoside triphosphate/diphosphate phosphatase (177 aa).

Catalysis depends on Arg23, which acts as the Proton donor. Mg(2+) is bound by residues Asn87, Asp103, Asp105, Asp107, Asp120, and Glu123.

The protein belongs to the Ntdp family. Requires Mg(2+) as cofactor.

The catalysed reaction is a ribonucleoside 5'-triphosphate + H2O = a ribonucleoside 5'-diphosphate + phosphate + H(+). It carries out the reaction a ribonucleoside 5'-diphosphate + H2O = a ribonucleoside 5'-phosphate + phosphate + H(+). Has nucleoside phosphatase activity towards nucleoside triphosphates and nucleoside diphosphates. The polypeptide is Nucleoside triphosphate/diphosphate phosphatase (Streptococcus suis (strain 98HAH33)).